A 157-amino-acid chain; its full sequence is Cyclic pyranopterin monophosphate synthase (157 aa).

Residues 74–76 and 112–113 contribute to the substrate site; these read MCH and ME. Aspartate 127 is a catalytic residue.

The protein belongs to the MoaC family. Homohexamer; trimer of dimers.

The enzyme catalyses (8S)-3',8-cyclo-7,8-dihydroguanosine 5'-triphosphate = cyclic pyranopterin phosphate + diphosphate. It functions in the pathway cofactor biosynthesis; molybdopterin biosynthesis. Functionally, catalyzes the conversion of (8S)-3',8-cyclo-7,8-dihydroguanosine 5'-triphosphate to cyclic pyranopterin monophosphate (cPMP). The sequence is that of Cyclic pyranopterin monophosphate synthase from Campylobacter jejuni subsp. jejuni serotype O:6 (strain 81116 / NCTC 11828).